Consider the following 429-residue polypeptide: Adenylosuccinate synthetase (429 aa).

Residues 12–18 (GDEGKGK) and 40–42 (GHT) each bind GTP. Asp-13 (proton acceptor) is an active-site residue. Mg(2+) is bound by residues Asp-13 and Gly-40. Residues 13-16 (DEGK), 38-41 (NAGH), Thr-130, Arg-144, Gln-225, Thr-240, and Arg-304 each bind IMP. The active-site Proton donor is His-41. 300–306 (ATTGRPR) is a binding site for substrate. GTP is bound by residues Arg-306, 332–334 (KLD), and 414–416 (SVG).

This sequence belongs to the adenylosuccinate synthetase family. As to quaternary structure, homodimer. The cofactor is Mg(2+).

It localises to the cytoplasm. The catalysed reaction is IMP + L-aspartate + GTP = N(6)-(1,2-dicarboxyethyl)-AMP + GDP + phosphate + 2 H(+). It functions in the pathway purine metabolism; AMP biosynthesis via de novo pathway; AMP from IMP: step 1/2. In terms of biological role, plays an important role in the de novo pathway of purine nucleotide biosynthesis. Catalyzes the first committed step in the biosynthesis of AMP from IMP. The chain is Adenylosuccinate synthetase from Syntrophobacter fumaroxidans (strain DSM 10017 / MPOB).